The following is a 432-amino-acid chain: RNA binding protein fox-1 homolog 2 (432 aa).

The span at 1-21 shows a compositional bias: low complexity; sequence MAEGGQAQQQPPQLGPGAAAR. The tract at residues 1-169 is disordered; that stretch reads MAEGGQAQQQ…STPKRLHVSN (169 aa). 2 stretches are compositionally biased toward polar residues: residues 60–69 and 101–121; these read QGNQEPTTTP and YAGQ…PHGE. A compositionally biased stretch (low complexity) spans 122 to 159; sequence QSSNSPSNQNGSLTQTEGGAQTDGQQSQTQSSENSESK. Positions 163–239 constitute an RRM domain; that stretch reads KRLHVSNIPF…RKIEVNNATA (77 aa). An Omega-N-methylarginine modification is found at arginine 323. Asymmetric dimethylarginine is present on residues arginine 339 and arginine 371. Asymmetric dimethylarginine; alternate is present on residues arginine 423 and arginine 428. Residues arginine 423 and arginine 428 each carry the omega-N-methylarginine; alternate modification.

In terms of assembly, interacts with ER-alpha N-terminal activation domain. Interacts with RBPMS; the interaction allows cooperative assembly of stable cell-specific alternative splicing regulatory complexes.

It localises to the nucleus. The protein localises to the cytoplasm. In terms of biological role, RNA-binding protein that regulates alternative splicing events by binding to 5'-UGCAUGU-3' elements. Prevents binding of U2AF2 to the 3'-splice site. Regulates alternative splicing of tissue-specific exons and of differentially spliced exons during erythropoiesis. Seems to act as a coregulatory factor of ER-alpha. Together with RNA binding proteins RBPMS and MBNL1/2, activates vascular smooth muscle cells alternative splicing events. The sequence is that of RNA binding protein fox-1 homolog 2 (Rbfox2) from Rattus norvegicus (Rat).